The following is a 236-amino-acid chain: MEASDWQGGEGDKPLEKVGSVPCLERSSSTVPTGDALVRHAKGLSQDTFKICKEYLRPLKKFLRKLNLPKDLPQKKRIKYTKQSLEALGGHINTFLQHYCRAWEIKHWKKMLWRFVSLFSELEAKQLRRLYKYTKTNQTAKFLAALCPLDAPERSLLANQEDCLPRLCSAWGLHGNISGMKERLSKMQAPGQEVVMLEEPRSSHCSRGDSLRKLPQKPKLKKKRIKERLESPKSCS.

Residues 1-29 (MEASDWQGGEGDKPLEKVGSVPCLERSSS) form a disordered region. The tract at residues 44-145 (LSQDTFKICK…TNQTAKFLAA (102 aa)) is CHD1 helical C-terminal domain (CHCT). A disordered region spans residues 197–236 (LEEPRSSHCSRGDSLRKLPQKPKLKKKRIKERLESPKSCS). Residues 198-212 (EEPRSSHCSRGDSLR) are compositionally biased toward basic and acidic residues. Residues 214–226 (LPQKPKLKKKRIK) show a composition bias toward basic residues. The segment covering 227 to 236 (ERLESPKSCS) has biased composition (basic and acidic residues).

In terms of tissue distribution, exclusively expressed in testes.

It localises to the cytoplasm. Its subcellular location is the nucleus. Its function is as follows. May play a role in regulation of apoptosis. The polypeptide is CHD1 helical C-terminal domain containing protein 1 (Chct1) (Mus musculus (Mouse)).